Here is a 142-residue protein sequence, read N- to C-terminus: Cytochrome c-type biogenesis protein CcmE (142 aa).

At 1 to 2 the chain is on the cytoplasmic side; it reads MK. The chain crosses the membrane as a helical; Signal-anchor for type II membrane protein span at residues 3-23; that stretch reads GKYLLGILVILGALGYMVFGG. Topologically, residues 24–142 are periplasmic; sequence LGRNLVYFLT…EVRKLIEEAQ (119 aa). Heme-binding residues include histidine 118 and tyrosine 122.

This sequence belongs to the CcmE/CycJ family.

The protein resides in the cell inner membrane. Heme chaperone required for the biogenesis of c-type cytochromes. Transiently binds heme delivered by CcmC and transfers the heme to apo-cytochromes in a process facilitated by CcmF and CcmH. The sequence is that of Cytochrome c-type biogenesis protein CcmE from Thermus thermophilus (strain ATCC 27634 / DSM 579 / HB8).